We begin with the raw amino-acid sequence, 688 residues long: Polyribonucleotide nucleotidyltransferase (688 aa).

Asp-484 and Asp-490 together coordinate Mg(2+). Residues 550–609 (PTTEIFNVAPDKIVEIIGQGGRVIKEIVEKFEVKIDLNKPSGEVKIMGNKERVLKTKEFI) enclose the KH domain. The 63-residue stretch at 626–688 (DEVLEAQVKR…NKGKIALDLA (63 aa)) folds into the S1 motif domain.

It belongs to the polyribonucleotide nucleotidyltransferase family. The cofactor is Mg(2+).

It is found in the cytoplasm. The catalysed reaction is RNA(n+1) + phosphate = RNA(n) + a ribonucleoside 5'-diphosphate. Functionally, involved in mRNA degradation. Catalyzes the phosphorolysis of single-stranded polyribonucleotides processively in the 3'- to 5'-direction. In Helicobacter pylori (strain ATCC 700392 / 26695) (Campylobacter pylori), this protein is Polyribonucleotide nucleotidyltransferase.